A 167-amino-acid polypeptide reads, in one-letter code: EF-hand calcium-binding domain-containing protein 11 (167 aa).

3 consecutive EF-hand domains span residues 17 to 52 (AERK…LFGY), 91 to 126 (DPYE…VAPR), and 127 to 162 (LQER…GLAN). Ca(2+) is bound by residues Asp140, Asp142, Asp144, His146, and Asp151.

This is EF-hand calcium-binding domain-containing protein 11 (efcab11) from Danio rerio (Zebrafish).